Consider the following 492-residue polypeptide: N-succinylglutamate 5-semialdehyde dehydrogenase (492 aa).

220–225 (GSASTG) serves as a coordination point for NAD(+). Active-site residues include E243 and C277.

This sequence belongs to the aldehyde dehydrogenase family. AstD subfamily.

The catalysed reaction is N-succinyl-L-glutamate 5-semialdehyde + NAD(+) + H2O = N-succinyl-L-glutamate + NADH + 2 H(+). It participates in amino-acid degradation; L-arginine degradation via AST pathway; L-glutamate and succinate from L-arginine: step 4/5. In terms of biological role, catalyzes the NAD-dependent reduction of succinylglutamate semialdehyde into succinylglutamate. The protein is N-succinylglutamate 5-semialdehyde dehydrogenase of Salmonella agona (strain SL483).